Consider the following 597-residue polypeptide: DNA import protein CedB (597 aa).

A helical transmembrane segment spans residues 10-30 (VVLLILGIISFNLVFIILAII). 286 to 293 (GPTGSGKT) provides a ligand contact to ATP.

The protein localises to the cell membrane. Part of the Ced system, which is involved in DNA import. The polypeptide is DNA import protein CedB (Sulfolobus acidocaldarius (strain ATCC 33909 / DSM 639 / JCM 8929 / NBRC 15157 / NCIMB 11770)).